Reading from the N-terminus, the 195-residue chain is Transcription factor 15 (195 aa).

Residues 44–65 (LEAARRGPGPGSGRRASNGAGP) form a disordered region. The segment covering 56–65 (GRRASNGAGP) has biased composition (low complexity). Ser-60 is modified (phosphoserine). Positions 70 to 122 (RQRQAANARERDRTQSVNTAFTALRTLIPTEPVDRKLSKIETLRLASSYIAHL) constitute a bHLH domain.

In terms of assembly, heterodimer; efficient DNA binding requires dimerization with another bHLH protein, such as TCF3/E12. Interacts with MEOX2. As to expression, expressed in heart and skeletal muscle. Specifically expressed in a subpopulation of embryonic stem cells (ESCs), that are still undifferentiated but primed for ifferentiation. Expressed in hematopoietic stem cells (HSCs).

Its subcellular location is the nucleus. Early transcription factor that plays a key role in somitogenesis, paraxial mesoderm development and regulation of stem cell pluripotency. Essential for the mesenchymal to epithelial transition associated with somite formation. Required for somite morphogenesis, thereby regulating patterning of the axial skeleton and skeletal muscles. Required for proper localization of somite epithelium markers during the mesenchymal to epithelial transition. Also plays a key role in regulation of stem cell pluripotency. Promotes pluripotency exit of embryonic stem cells (ESCs) by priming ESCs for differentiation. Acts as a key regulator of self-renewal of hematopoietic stem cells (HSCs) by mediating HSCs quiescence and long-term self-renewal. Together with MEOX2, regulates transcription in heart endothelial cells to regulate fatty acid transport across heart endothelial cells. Acts by forming a heterodimer with another helix-loop-helix (bHLH) protein, such as TCF3/E12, that binds DNA on E-box motifs (5'-CANNTG-3') and activates transcription of target genes. This chain is Transcription factor 15, found in Mus musculus (Mouse).